A 300-amino-acid chain; its full sequence is uncharacterized protein (300 aa).

The protein belongs to the chlamydial CPn_0593/CT_474/TC_0759 family.

This is an uncharacterized protein from Chlamydia muridarum (strain MoPn / Nigg).